The following is a 562-amino-acid chain: Tubby-related protein 2 (562 aa).

Positions 1–81 (MDREGPRGPR…RRGEERFQSD (81 aa)) are disordered. The segment covering 35–46 (QKLEQQRQLFEK) has biased composition (basic and acidic residues). Serine 152, serine 153, and serine 155 each carry phosphoserine. A disordered region spans residues 179–294 (LRRGWLASPG…SNHNAWNMTC (116 aa)). The residue at position 211 (threonine 211) is a Phosphothreonine. Residue serine 213 is modified to Phosphoserine. The segment covering 225 to 240 (DGDHGDLAPCKVEENT) has biased composition (basic and acidic residues). Positions 285–294 (SNHNAWNMTC) are enriched in polar residues.

Belongs to the TUB family. As to expression, expressed in retina and testis.

Its subcellular location is the cytoplasm. The protein resides in the secreted. In Mus musculus (Mouse), this protein is Tubby-related protein 2 (Tulp2).